Consider the following 151-residue polypeptide: Large ribosomal subunit protein uL13 (151 aa).

Belongs to the universal ribosomal protein uL13 family. As to quaternary structure, part of the 50S ribosomal subunit.

Functionally, this protein is one of the early assembly proteins of the 50S ribosomal subunit, although it is not seen to bind rRNA by itself. It is important during the early stages of 50S assembly. The sequence is that of Large ribosomal subunit protein uL13 from Synechococcus elongatus (strain ATCC 33912 / PCC 7942 / FACHB-805) (Anacystis nidulans R2).